A 212-amino-acid chain; its full sequence is Small ribosomal subunit protein uS3 (212 aa).

The region spanning 38 to 106 (IRKFVKKTLY…EFAIEVNEIR (69 aa)) is the KH type-2 domain.

It belongs to the universal ribosomal protein uS3 family. As to quaternary structure, part of the 30S ribosomal subunit. Forms a tight complex with proteins S10 and S14.

Its function is as follows. Binds the lower part of the 30S subunit head. Binds mRNA in the 70S ribosome, positioning it for translation. The sequence is that of Small ribosomal subunit protein uS3 from Nitratidesulfovibrio vulgaris (strain ATCC 29579 / DSM 644 / CCUG 34227 / NCIMB 8303 / VKM B-1760 / Hildenborough) (Desulfovibrio vulgaris).